Consider the following 244-residue polypeptide: rRNA adenine N-6-methyltransferase (244 aa).

Asn-11, Ile-13, Gly-38, Glu-59, Asp-84, and Asn-101 together coordinate S-adenosyl-L-methionine.

It belongs to the class I-like SAM-binding methyltransferase superfamily. rRNA adenine N(6)-methyltransferase family.

The catalysed reaction is adenosine(2085) in 23S rRNA + 2 S-adenosyl-L-methionine = N(6)-dimethyladenosine(2085) in 23S rRNA + 2 S-adenosyl-L-homocysteine + 2 H(+). Its function is as follows. This protein produces a dimethylation of the adenine residue at position 2085 in 23S rRNA, resulting in reduced affinity between ribosomes and macrolide-lincosamide-streptogramin B antibiotics. In Staphylococcus epidermidis, this protein is rRNA adenine N-6-methyltransferase (ermM).